Reading from the N-terminus, the 562-residue chain is Bifunctional coenzyme A synthase (562 aa).

2 positions are modified to phosphoserine: Ser-177 and Ser-182. Residues 179 to 357 (VARSAKQPVR…HKRPELPPGC (179 aa)) form a phosphopantetheine adenylyltransferase region. The DPCK domain occupies 359–562 (VIGLTGISGS…KRISEAPSDP (204 aa)). ATP is bound at residue 364-371 (GISGSGKS).

This sequence in the central section; belongs to the eukaryotic CoaD family. In terms of assembly, monomer. In terms of processing, the N-terminus is blocked.

Its subcellular location is the cytoplasm. The protein localises to the mitochondrion matrix. It carries out the reaction (R)-4'-phosphopantetheine + ATP + H(+) = 3'-dephospho-CoA + diphosphate. The catalysed reaction is 3'-dephospho-CoA + ATP = ADP + CoA + H(+). It functions in the pathway cofactor biosynthesis; coenzyme A biosynthesis; CoA from (R)-pantothenate: step 4/5. It participates in cofactor biosynthesis; coenzyme A biosynthesis; CoA from (R)-pantothenate: step 5/5. In terms of biological role, bifunctional enzyme that catalyzes the fourth and fifth sequential steps of CoA biosynthetic pathway. The fourth reaction is catalyzed by the phosphopantetheine adenylyltransferase, coded by the coaD domain; the fifth reaction is catalyzed by the dephospho-CoA kinase, coded by the coaE domain. May act as a point of CoA biosynthesis regulation. This chain is Bifunctional coenzyme A synthase, found in Sus scrofa (Pig).